A 199-amino-acid chain; its full sequence is Fe/S biogenesis protein NfuA (199 aa).

Cys151 and Cys154 together coordinate [4Fe-4S] cluster.

Belongs to the NfuA family. In terms of assembly, homodimer. It depends on [4Fe-4S] cluster as a cofactor.

In terms of biological role, involved in iron-sulfur cluster biogenesis. Binds a 4Fe-4S cluster, can transfer this cluster to apoproteins, and thereby intervenes in the maturation of Fe/S proteins. Could also act as a scaffold/chaperone for damaged Fe/S proteins. The polypeptide is Fe/S biogenesis protein NfuA (Stenotrophomonas maltophilia (strain R551-3)).